Consider the following 612-residue polypeptide: Dihydroxy-acid dehydratase (612 aa).

Asp81 is a Mg(2+) binding site. A [2Fe-2S] cluster-binding site is contributed by Cys122. The Mg(2+) site is built by Asp123 and Lys124. Residue Lys124 is modified to N6-carboxylysine. Cys195 lines the [2Fe-2S] cluster pocket. Glu491 contacts Mg(2+). Ser517 (proton acceptor) is an active-site residue.

Belongs to the IlvD/Edd family. In terms of assembly, homodimer. [2Fe-2S] cluster is required as a cofactor. Requires Mg(2+) as cofactor.

It catalyses the reaction (2R)-2,3-dihydroxy-3-methylbutanoate = 3-methyl-2-oxobutanoate + H2O. It carries out the reaction (2R,3R)-2,3-dihydroxy-3-methylpentanoate = (S)-3-methyl-2-oxopentanoate + H2O. It functions in the pathway amino-acid biosynthesis; L-isoleucine biosynthesis; L-isoleucine from 2-oxobutanoate: step 3/4. The protein operates within amino-acid biosynthesis; L-valine biosynthesis; L-valine from pyruvate: step 3/4. Functionally, functions in the biosynthesis of branched-chain amino acids. Catalyzes the dehydration of (2R,3R)-2,3-dihydroxy-3-methylpentanoate (2,3-dihydroxy-3-methylvalerate) into 2-oxo-3-methylpentanoate (2-oxo-3-methylvalerate) and of (2R)-2,3-dihydroxy-3-methylbutanoate (2,3-dihydroxyisovalerate) into 2-oxo-3-methylbutanoate (2-oxoisovalerate), the penultimate precursor to L-isoleucine and L-valine, respectively. In Rhizobium johnstonii (strain DSM 114642 / LMG 32736 / 3841) (Rhizobium leguminosarum bv. viciae), this protein is Dihydroxy-acid dehydratase.